The primary structure comprises 209 residues: MARYTGPVCRLCRREGMKLFLKGTKCFTDKCAIEKRNFAPGQHGRDRKAKIVGYGLQLREKQKAKRIYFTLEGQFREYYEKASRAPGVTGELLIQQLECRLDNIAFRLGFATSRRQARQIVRHGHVEVNGRKVNIPSFQVKVGDEIKIRPNSSKLVVVEMGRDFASGQPAPAWLQVDHANLSGKVVSLPKREDVNLPVNEQLIVELYSK.

Residues 99 to 161 (CRLDNIAFRL…SSKLVVVEMG (63 aa)) enclose the S4 RNA-binding domain.

The protein belongs to the universal ribosomal protein uS4 family. As to quaternary structure, part of the 30S ribosomal subunit. Contacts protein S5. The interaction surface between S4 and S5 is involved in control of translational fidelity.

In terms of biological role, one of the primary rRNA binding proteins, it binds directly to 16S rRNA where it nucleates assembly of the body of the 30S subunit. Functionally, with S5 and S12 plays an important role in translational accuracy. In Acidobacterium capsulatum (strain ATCC 51196 / DSM 11244 / BCRC 80197 / JCM 7670 / NBRC 15755 / NCIMB 13165 / 161), this protein is Small ribosomal subunit protein uS4.